A 235-amino-acid chain; its full sequence is Aspartate/glutamate leucyltransferase (235 aa).

Belongs to the R-transferase family. Bpt subfamily.

It is found in the cytoplasm. It catalyses the reaction N-terminal L-glutamyl-[protein] + L-leucyl-tRNA(Leu) = N-terminal L-leucyl-L-glutamyl-[protein] + tRNA(Leu) + H(+). It carries out the reaction N-terminal L-aspartyl-[protein] + L-leucyl-tRNA(Leu) = N-terminal L-leucyl-L-aspartyl-[protein] + tRNA(Leu) + H(+). Functionally, functions in the N-end rule pathway of protein degradation where it conjugates Leu from its aminoacyl-tRNA to the N-termini of proteins containing an N-terminal aspartate or glutamate. The protein is Aspartate/glutamate leucyltransferase of Pseudomonas putida (strain GB-1).